The chain runs to 531 residues: Beta-hexosaminidase subunit beta (531 aa).

A signal peptide spans 1 to 21; the sequence is MEVLPGLLRLLAALVVAERWA. An intrachain disulfide couples cysteine 67 to cysteine 111. N-linked (GlcNAc...) asparagine glycans are attached at residues asparagine 120, asparagine 164, and asparagine 301. 2 cysteine pairs are disulfide-bonded: cysteine 283–cysteine 334 and cysteine 508–cysteine 525. Residue glutamate 329 is the Proton donor of the active site.

This sequence belongs to the glycosyl hydrolase 20 family. There are 3 forms of beta-hexosaminidase: hexosaminidase A is a heterodimer composed of one subunit alpha and one subunit beta (chain A and B); hexosaminidase B is a homodimer of two beta subunits (two chains A and B); hexosaminidase S is a homodimer of two alpha subunits. The composition of the dimer (isozyme A versus isozyme S) has a significant effect on the substrate specificity of the alpha subunit active site.

The protein localises to the lysosome. It localises to the cytoplasmic vesicle. It is found in the secretory vesicle. Its subcellular location is the cortical granule. The enzyme catalyses Hydrolysis of terminal non-reducing N-acetyl-D-hexosamine residues in N-acetyl-beta-D-hexosaminides.. It catalyses the reaction N-acetyl-beta-D-galactosaminyl-(1-&gt;4)-beta-D-3-sulfogalactosyl-(1-&gt;4)-beta-D-glucosyl-(1&lt;-&gt;1')-ceramide + H2O = a beta-D-3-sulfogalactosyl-(1-&gt;4)-beta-D-glucosyl-(1&lt;-&gt;1')-ceramide + N-acetyl-beta-D-galactosamine. The catalysed reaction is a ganglioside GM2 (d18:1(4E)) + H2O = a ganglioside GM3 (d18:1(4E)) + N-acetyl-beta-D-galactosamine. It carries out the reaction a ganglioside GM2 + H2O = a ganglioside GM3 + N-acetyl-beta-D-galactosamine. The enzyme catalyses beta-D-GalNAc-(1-&gt;4)-alpha-L-IdoA-(1-&gt;3)-beta-D-GalNAc-4-sulfate-(1-&gt;4)-alpha-L-IdoA-(1-&gt;3)-D-GalNAc-4-sulfate + H2O = alpha-L-IdoA-(1-&gt;3)-beta-D-GalNAc-4-sulfate-(1-&gt;4)-alpha-L-IdoA-(1-&gt;3)-D-GalNAc-4-sulfate + N-acetyl-D-galactosamine. It catalyses the reaction N-acetyl-beta-D-6-sulfogalactosaminyl-(1-&gt;4)-alpha-L-iduronyl-(1-&gt;3)-N-acetyl-D-6-sulfogalactosamine + H2O = alpha-L-iduronyl-(1-&gt;3)-N-acetyl-D-6-sulfogalactosamine + N-acetyl-D-6-sulfogalactosamine. With respect to regulation, addition of GM2A stimulates the hydrolysis of sulfated glycosphingolipid SM2 and the ganglioside GM2. Functionally, hydrolyzes the non-reducing end N-acetyl-D-hexosamine and/or sulfated N-acetyl-D-hexosamine of glycoconjugates, such as the oligosaccharide moieties from proteins and neutral glycolipids, or from certain mucopolysaccharides. The isozyme B does not hydrolyze each of these substrates, however hydrolyzes efficiently neutral oligosaccharide. Only the isozyme A is responsible for the degradation of GM2 gangliosides in the presence of GM2A. During fertilization is responsible, at least in part, for the zona block to polyspermy. Present in the cortical granules of non-activated oocytes, is exocytosed during the cortical reaction in response to oocyte activation and inactivates the sperm galactosyltransferase-binding site, accounting for the block in sperm binding to the zona pellucida. The sequence is that of Beta-hexosaminidase subunit beta from Sus scrofa (Pig).